A 93-amino-acid chain; its full sequence is Small ribosomal subunit protein uS19 (93 aa).

It belongs to the universal ribosomal protein uS19 family.

Protein S19 forms a complex with S13 that binds strongly to the 16S ribosomal RNA. The polypeptide is Small ribosomal subunit protein uS19 (Mycobacterium sp. (strain JLS)).